The chain runs to 626 residues: Nuclear receptor subfamily 4 group A member 3 (626 aa).

The interval 1–108 is activation function (AF)-1 domain; sequence MPCVQAQYSP…HHHHHHHHHH (108 aa). The segment at 1 to 138 is required for DNA-PK heterotrimer; sequence MPCVQAQYSP…PSTSMYFKQS (138 aa). The interval 1-291 is interaction with NCOA1, NCOA2, NCOA3 and KAT2B; the sequence is MPCVQAQYSP…SRSSSSGEGT (291 aa). Disordered stretches follow at residues 92-152, 192-211, and 265-284; these read PSYH…PPQA, HFKP…GHHL, and PTAS…PSRS. Residues 93 to 110 are compositionally biased toward basic residues; it reads SYHHHHHHHHHHHHHHQQ. Composition is skewed to pro residues over residues 140–149 and 195–204; these read PSTPTTPAFP and PSPPHPPAPS. Positions 268–284 are enriched in low complexity; that stretch reads SSLLGESPSLPSPPSRS. Residues 289 to 364 constitute a DNA-binding region (nuclear receptor); that stretch reads EGTCAVCGDN…VGMVKEVVRT (76 aa). 2 NR C4-type zinc fingers span residues 292 to 312 and 328 to 352; these read CAVC…CEGC and CLAN…FQKC. The segment at 364-394 is disordered; sequence TDSLKGRRGRLPSKPKSPLQQEPSQPSPPSP. Over residues 377–387 the composition is skewed to low complexity; that stretch reads KPKSPLQQEPS. An interaction with KAT2B region spans residues 379–626; it reads KSPLQQEPSQ…DKLFLDTLPF (248 aa). Residues 394 to 623 enclose the NR LBD domain; sequence PPICMMNALV…SIIDKLFLDT (230 aa).

This sequence belongs to the nuclear hormone receptor family. NR4 subfamily. As to quaternary structure, interacts with SIX3 (via homeobox); differentially regulates the transcriptional activities of NR4A3. Interacts with the constituents of DNA-PK heterotrimer PRKDC, XRCC6 and XRCC5; phosphorylates and prevents NR4A3 ubiquitinylation and degradation. Interacts with NCOA2; potentiates the activity of the NR4A3. Interacts with NCOA1, NCOA3, MED1 and KAT2B. Interacts with EP300 and NCOA2; mediates the recruitment of MED1 in the coactivator complex. Interacts with NR3C1 (via nuclear receptor DNA-binding domain); the interactions represses transcription activity of NR4A3 on the POMC promoter Nur response element (NurRE). Interacts with TRIM28; the interactions potentiates NR4A3 activity on NurRE promoter. Binds DNA as a monomer and homodimer. Interacts with PARP1; activates PARP1 by improving acetylation of PARP1 and suppressing the interaction between PARP1 and SIRT1. Post-translationally, phosphorylated by PRKDC. As to expression, isoform alpha is highly expressed in skeletal muscle. Isoform beta is highly expressed in skeletal muscle and low expressed in fetal brain and placenta.

The protein resides in the nucleus. Functionally, transcriptional activator that binds to regulatory elements in promoter regions in a cell- and response element (target)-specific manner. Induces gene expression by binding as monomers to the NR4A1 response element (NBRE) 5'-AAAAGGTCA-3' site and as homodimers to the Nur response element (NurRE) site in the promoter of their regulated target genes. Plays a role in the regulation of proliferation, survival and differentiation of many different cell types and also in metabolism and inflammation. Mediates proliferation of vascular smooth muscle, myeloid progenitor cell and type B pancreatic cells; promotes mitogen-induced vascular smooth muscle cell proliferation through transactivation of SKP2 promoter by binding a NBRE site. Upon PDGF stimulation, stimulates vascular smooth muscle cell proliferation by regulating CCND1 and CCND2 expression. In islets, induces type B pancreatic cell proliferation through up-regulation of genes that activate cell cycle, as well as genes that cause degradation of the CDKN1A. Negatively regulates myeloid progenitor cell proliferation by repressing RUNX1 in a NBRE site-independent manner. During inner ear, plays a role as a key mediator of the proliferative growth phase of semicircular canal development. Also mediates survival of neuron and smooth muscle cells; mediates CREB-induced neuronal survival, and during hippocampus development, plays a critical role in pyramidal cell survival and axonal guidance. Is required for S phase entry of the cell cycle and survival of smooth muscle cells by inducing CCND1, resulting in RB1 phosphorylation. Binds to NBRE motif in CCND1 promoter, resulting in the activation of the promoter and CCND1 transcription. Also plays a role in inflammation; upon TNF stimulation, mediates monocyte adhesion by inducing the expression of VCAM1 and ICAM1 by binding to the NBRE consensus site. In mast cells activated by Fc-epsilon receptor cross-linking, promotes the synthesis and release of cytokines but impairs events leading to degranulation. Also plays a role in metabolism; by modulating feeding behavior; and by playing a role in energy balance by inhibiting the glucocorticoid-induced orexigenic neuropeptides AGRP expression, at least in part by forming a complex with activated NR3C1 on the AGRP- glucocorticoid response element (GRE), and thus weakening the DNA binding activity of NR3C1. Upon catecholamines stimulation, regulates gene expression that controls oxidative metabolism in skeletal muscle. Plays a role in glucose transport by regulating translocation of the SLC2A4 glucose transporter to the cell surface. Finally, during gastrulation plays a crucial role in the formation of anterior mesoderm by controlling cell migration. Inhibits adipogenesis. Also participates in cardiac hypertrophy by activating PARP1. This is Nuclear receptor subfamily 4 group A member 3 (NR4A3) from Homo sapiens (Human).